Consider the following 505-residue polypeptide: MTDTVIAPLSALPLLADLPALAPELVLLVTAVCLMLGDLFYPRERVFQQWLTAAGAAVALALTLSMNFSGGATAFGGVFRADGLAAAFKVVCLAALGLTALMSEAFCRHASMRQGEYYSLMAFSTLGMCVMVSAGDAIVLYLGLELMALPIYALVALRTADPRSSEAAIKYFLMGSFASALLLFGLSILYGLTGQTDIAEMAHRLAVSLSVSDMHTLPAAVVALGLVLAGLGFKVATVPFHVWAPDVYEGAPTTVTAFMSVAAKTASFAVLGRVLLQGLPQLSPLWSDALAGLAVLTMLLGNIAALAQTSLKRMLAYSAIAHAGYALLGLAACTPEGLRATAAYLTIYLCMNIGAFAVIIYLSARSGRGRMGEGPDAGEDLDDYRGLAARSPLLAAVMLVFLFSLTGIPPTAGFMGKFMLFRAAFAAGYQITVVVAVVCSTISAWYYLGVAKRMYMQDSQDDAPATSCAITGETGLQAVLAVCLAGAVLWGIFPQSLLFWINVYF.

14 helical membrane passes run 20 to 40 (ALAP…GDLF), 59 to 79 (ALAL…GGVF), 83 to 103 (GLAA…ALMS), 115 to 135 (GEYY…VSAG), 137 to 157 (AIVL…LVAL), 172 to 192 (FLMG…LYGL), 220 to 240 (AVVA…TVPF), 251 to 271 (APTT…FAVL), 285 to 305 (LWSD…NIAA), 314 to 334 (MLAY…AACT), 342 to 362 (AAYL…IIYL), 394 to 414 (LAAV…TAGF), 431 to 451 (ITVV…LGVA), and 481 to 501 (AVCL…LFWI).

Belongs to the complex I subunit 2 family. As to quaternary structure, NDH-1 is composed of 14 different subunits. Subunits NuoA, H, J, K, L, M, N constitute the membrane sector of the complex.

The protein resides in the cell inner membrane. It catalyses the reaction a quinone + NADH + 5 H(+)(in) = a quinol + NAD(+) + 4 H(+)(out). Its function is as follows. NDH-1 shuttles electrons from NADH, via FMN and iron-sulfur (Fe-S) centers, to quinones in the respiratory chain. The immediate electron acceptor for the enzyme in this species is believed to be ubiquinone. Couples the redox reaction to proton translocation (for every two electrons transferred, four hydrogen ions are translocated across the cytoplasmic membrane), and thus conserves the redox energy in a proton gradient. The protein is NADH-quinone oxidoreductase subunit N of Desulfovibrio desulfuricans (strain ATCC 27774 / DSM 6949 / MB).